The sequence spans 308 residues: MAKEEKNFMVDFLAGGLSAAVSKTAAAPIERVKLLIQNQDEMIKQGRLASPYKGIGECFVRTVREEGFGSLWRGNTANVIRYFPTQALNFAFKDKFKRMFGFNKDKEYWKWFAGNMASGGAAGAVSLSFVYSLDYARTRLANDAKSAKKGGGDRQFNGLVDVYRKTIASDGIAGLYRGFNISCVGIVVYRGLYFGMYDSLKPVVLVGPLANNFLAAFLLGWGITIGAGLASYPIDTIRRRMMMTSGSAVKYNSSFHCFQEIVKNEGMKSLFKGAGANILRAVAGAGVLAGYDQLQVILLGKKYGSGEA.

3 Solcar repeats span residues 6 to 99 (KNFM…FKRM), 110 to 203 (KWFA…LKPV), and 211 to 297 (NNFL…LQVI). The next 5 helical transmembrane spans lie at 8–35 (FMVD…VKLL), 76–100 (TANV…KRMF), 108–128 (YWKW…VSLS), 179–200 (FNIS…YDSL), and 214–234 (LAAF…SYPI). Arg-81 and Lys-93 together coordinate ADP. Residue Arg-238 participates in ADP binding. Residues 238 to 243 (RRRMMM) are important for transport activity. Residues 238–243 (RRRMMM) carry the Nucleotide carrier signature motif motif. Residues 274–294 (AGANILRAVAGAGVLAGYDQL) traverse the membrane as a helical segment.

This sequence belongs to the mitochondrial carrier (TC 2.A.29) family. In terms of assembly, monomer.

The protein localises to the mitochondrion inner membrane. It catalyses the reaction ADP(in) + ATP(out) = ADP(out) + ATP(in). With respect to regulation, the matrix-open state (m-state) is inhibited by the membrane-permeable bongkrekic acid (BKA). The cytoplasmic-open state (c-state) is inhibited by the membrane-impermeable toxic inhibitor carboxyatractyloside (CATR). Functionally, ADP:ATP antiporter that mediates import of ADP into the mitochondrial matrix for ATP synthesis, and export of ATP out to fuel the cell. Cycles between the cytoplasmic-open state (c-state) and the matrix-open state (m-state): operates by the alternating access mechanism with a single substrate-binding site intermittently exposed to either the cytosolic (c-state) or matrix (m-state) side of the inner mitochondrial membrane. The sequence is that of ADP,ATP carrier protein (ABT) from Chlamydomonas reinhardtii (Chlamydomonas smithii).